Reading from the N-terminus, the 103-residue chain is NADH-quinone oxidoreductase subunit K (103 aa).

3 consecutive transmembrane segments (helical) span residues 6–26 (LSHF…GIFL), 32–52 (LVLL…FVAF), and 63–83 (IFVF…LAIL).

It belongs to the complex I subunit 4L family. As to quaternary structure, NDH-1 is composed of 14 different subunits. Subunits NuoA, H, J, K, L, M, N constitute the membrane sector of the complex.

It localises to the cell inner membrane. It catalyses the reaction a quinone + NADH + 5 H(+)(in) = a quinol + NAD(+) + 4 H(+)(out). Its function is as follows. NDH-1 shuttles electrons from NADH, via FMN and iron-sulfur (Fe-S) centers, to quinones in the respiratory chain. The immediate electron acceptor for the enzyme in this species is believed to be ubiquinone. Couples the redox reaction to proton translocation (for every two electrons transferred, four hydrogen ions are translocated across the cytoplasmic membrane), and thus conserves the redox energy in a proton gradient. This chain is NADH-quinone oxidoreductase subunit K, found in Dechloromonas aromatica (strain RCB).